A 145-amino-acid chain; its full sequence is D-aminoacyl-tRNA deacylase (145 aa).

The Gly-cisPro motif, important for rejection of L-amino acids motif lies at Gly-137 to Pro-138.

It belongs to the DTD family. As to quaternary structure, homodimer.

Its subcellular location is the cytoplasm. The enzyme catalyses glycyl-tRNA(Ala) + H2O = tRNA(Ala) + glycine + H(+). The catalysed reaction is a D-aminoacyl-tRNA + H2O = a tRNA + a D-alpha-amino acid + H(+). An aminoacyl-tRNA editing enzyme that deacylates mischarged D-aminoacyl-tRNAs. Also deacylates mischarged glycyl-tRNA(Ala), protecting cells against glycine mischarging by AlaRS. Acts via tRNA-based rather than protein-based catalysis; rejects L-amino acids rather than detecting D-amino acids in the active site. By recycling D-aminoacyl-tRNA to D-amino acids and free tRNA molecules, this enzyme counteracts the toxicity associated with the formation of D-aminoacyl-tRNA entities in vivo and helps enforce protein L-homochirality. This chain is D-aminoacyl-tRNA deacylase, found in Cereibacter sphaeroides (strain KD131 / KCTC 12085) (Rhodobacter sphaeroides).